We begin with the raw amino-acid sequence, 612 residues long: MPDYRSKTSTHGRNMAGARALWRATGMKDEDFKKPIIAIANSFTQFVPGHVHLKDLGQLVAREIEKHGGVAKEFNTIAVDDGIAMGHDGMLYSLPSREIIADSVEYMVNAHCADAIVCISNCDKITPGMLMAALRLNIPVVFVSGGPMEAGKTKLANHGLDLVDAMVVAADDSCSDEKVAEYERSACPTCGSCSGMFTANSMNCLTEALGLSLPGNGSTLATHADREQLFLRAGRLVVELCQRYYGEGDESVLPRNVASFKAFENAMTLDIAMGGSTNTILHLLAAAQEAELAFDLRDIDRLSRKVPQLCKVAPNIQKYHMEDVHRAGGIFSILGELARGGLLHTDVPTVHSPSMADAIAQWDITQTRDEKVHTFFKAGPAGIPTQVAFSQSTRWDTLDDDRENGCIRSVEHAYSQEGGLAVLYGNIALDGCVVKTAGVDESIHVFEGTAKIFESQDSAVKGILADEVKAGDIVIIRYEGPKGGPGMQEMLYPTSYLKSKGLGKVCALLTDGRFSGGTSGLSIGHASPEAAAGGAIGLVKDGDKVLIDIPNRSINLLVSDEELAVRRAEQDKKGWKPVQPRARKVSTALKAYALLATSADKGAVRDKAMLDG.

Aspartate 81 contributes to the Mg(2+) binding site. Residue cysteine 122 coordinates [2Fe-2S] cluster. Residues aspartate 123 and lysine 124 each coordinate Mg(2+). Lysine 124 is subject to N6-carboxylysine. Cysteine 193 contributes to the [2Fe-2S] cluster binding site. Residue glutamate 489 coordinates Mg(2+). Serine 515 functions as the Proton acceptor in the catalytic mechanism.

This sequence belongs to the IlvD/Edd family. In terms of assembly, homodimer. [2Fe-2S] cluster serves as cofactor. Requires Mg(2+) as cofactor.

The catalysed reaction is (2R)-2,3-dihydroxy-3-methylbutanoate = 3-methyl-2-oxobutanoate + H2O. The enzyme catalyses (2R,3R)-2,3-dihydroxy-3-methylpentanoate = (S)-3-methyl-2-oxopentanoate + H2O. It participates in amino-acid biosynthesis; L-isoleucine biosynthesis; L-isoleucine from 2-oxobutanoate: step 3/4. Its pathway is amino-acid biosynthesis; L-valine biosynthesis; L-valine from pyruvate: step 3/4. Its function is as follows. Functions in the biosynthesis of branched-chain amino acids. Catalyzes the dehydration of (2R,3R)-2,3-dihydroxy-3-methylpentanoate (2,3-dihydroxy-3-methylvalerate) into 2-oxo-3-methylpentanoate (2-oxo-3-methylvalerate) and of (2R)-2,3-dihydroxy-3-methylbutanoate (2,3-dihydroxyisovalerate) into 2-oxo-3-methylbutanoate (2-oxoisovalerate), the penultimate precursor to L-isoleucine and L-valine, respectively. The protein is Dihydroxy-acid dehydratase of Ectopseudomonas mendocina (strain ymp) (Pseudomonas mendocina).